We begin with the raw amino-acid sequence, 559 residues long: Dihydroxy-acid dehydratase (559 aa).

Residue Asp-78 participates in Mg(2+) binding. Cys-119 contributes to the [2Fe-2S] cluster binding site. Positions 120 and 121 each coordinate Mg(2+). Lys-121 is modified (N6-carboxylysine). A [2Fe-2S] cluster-binding site is contributed by Cys-191. Residue Glu-442 coordinates Mg(2+). Ser-468 acts as the Proton acceptor in catalysis.

It belongs to the IlvD/Edd family. As to quaternary structure, homodimer. It depends on [2Fe-2S] cluster as a cofactor. The cofactor is Mg(2+).

The enzyme catalyses (2R)-2,3-dihydroxy-3-methylbutanoate = 3-methyl-2-oxobutanoate + H2O. It catalyses the reaction (2R,3R)-2,3-dihydroxy-3-methylpentanoate = (S)-3-methyl-2-oxopentanoate + H2O. Its pathway is amino-acid biosynthesis; L-isoleucine biosynthesis; L-isoleucine from 2-oxobutanoate: step 3/4. It functions in the pathway amino-acid biosynthesis; L-valine biosynthesis; L-valine from pyruvate: step 3/4. In terms of biological role, functions in the biosynthesis of branched-chain amino acids. Catalyzes the dehydration of (2R,3R)-2,3-dihydroxy-3-methylpentanoate (2,3-dihydroxy-3-methylvalerate) into 2-oxo-3-methylpentanoate (2-oxo-3-methylvalerate) and of (2R)-2,3-dihydroxy-3-methylbutanoate (2,3-dihydroxyisovalerate) into 2-oxo-3-methylbutanoate (2-oxoisovalerate), the penultimate precursor to L-isoleucine and L-valine, respectively. The polypeptide is Dihydroxy-acid dehydratase (Agathobacter rectalis (strain ATCC 33656 / DSM 3377 / JCM 17463 / KCTC 5835 / VPI 0990) (Eubacterium rectale)).